Here is a 280-residue protein sequence, read N- to C-terminus: Large ribosomal subunit protein uL2cz/uL2cy (280 aa).

Disordered regions lie at residues 1-25 (MAIHLYKTSTPSTRNGAVDSQVKSN) and 231-280 (PVDH…RRTK).

It belongs to the universal ribosomal protein uL2 family. As to quaternary structure, part of the 50S ribosomal subunit.

It localises to the plastid. Its subcellular location is the chloroplast. This chain is Large ribosomal subunit protein uL2cz/uL2cy (rpl2-A), found in Platanus occidentalis (Sycamore).